The following is a 220-amino-acid chain: Claudin-22 (220 aa).

Over 1-10 the chain is Cytoplasmic; it reads MALVFRTVAQ. The helical transmembrane segment at 11-30 threads the bilayer; it reads LAGVSLSLLGWVLSCLTNYL. At 31-81 the chain is on the extracellular side; that stretch reads PHWKNLNLDLNEMENWTMGLWQTCVIQEEVGMQCKDFDSFLALPAELRVSR. The helical transmembrane segment at 82–102 threads the bilayer; sequence ILMFLSNGLGFLGLLVSGFGL. The Cytoplasmic portion of the chain corresponds to 103 to 117; it reads DCLRIGESQRDLKRR. The chain crosses the membrane as a helical span at residues 118–138; sequence LLILGGILSWASGVTALVPVS. The Extracellular segment spans residues 139 to 164; that stretch reads WVAHKTVQEFWDENVPDFVPRWEFGE. A helical membrane pass occupies residues 165–185; it reads ALFLGWFAGLSLLLGGCLLHC. The Cytoplasmic portion of the chain corresponds to 186 to 220; that stretch reads AACSSHAPLASGHYAVAQTQDHHQELETRNTNLKH.

Belongs to the claudin family.

It is found in the cell junction. Its subcellular location is the tight junction. The protein localises to the cell membrane. In terms of biological role, plays a major role in tight junction-specific obliteration of the intercellular space, through calcium-independent cell-adhesion activity. The chain is Claudin-22 (CLDN22) from Homo sapiens (Human).